Consider the following 541-residue polypeptide: Atrial natriuretic peptide receptor 3 (541 aa).

Residues 1–26 (MPSLLVLTFSPCVLLGWALLAGGTGG) form the signal peptide. The Extracellular portion of the chain corresponds to 27-481 (GGVGGGGGGA…PCKSSGGLEE (455 aa)). N-linked (GlcNAc...) (complex) asparagine glycosylation occurs at asparagine 86. 3 residues coordinate chloride: serine 106, valine 135, and cysteine 136. Cystine bridges form between cysteine 108–cysteine 136 and cysteine 213–cysteine 261. The N-linked (GlcNAc...) (high mannose) asparagine glycan is linked to asparagine 293. N-linked (GlcNAc...) (complex) asparagine glycosylation is present at asparagine 394. Residues 482-504 (SAVTGIVVGALLGAGLLMAFYFF) traverse the membrane as a helical segment. Topologically, residues 505-541 (RKKYRITIERRTQQEESNLGKHRELREDSIRSHFSVA) are cytoplasmic.

It belongs to the ANF receptor family. In terms of assembly, homodimer; disulfide-linked. Dimers can also be formed through the C-terminal cysteine of isoform 2. Interacts with OSTN.

It is found in the cell membrane. In terms of biological role, receptor for the natriuretic peptide hormones, binding with similar affinities atrial natriuretic peptide NPPA/ANP, brain natriuretic peptide NPPB/BNP, and C-type natriuretic peptide NPPC/CNP. May function as a clearance receptor for NPPA, NPPB and NPPC, regulating their local concentrations and effects. Acts as a regulator of osteoblast differentiation and bone growth by binding to its ligand osteocrin, thereby preventing binding between NPR3/NPR-C and natriuretic peptides, leading to increase cGMP production. The sequence is that of Atrial natriuretic peptide receptor 3 (NPR3) from Homo sapiens (Human).